A 92-amino-acid polypeptide reads, in one-letter code: Transcription factor S4 (92 aa).

The ZR-N stretch occupies residues 1–31 (MRFCPKCGSFLKVKGNKMVCSKCGYSDHDVE). Zn(2+)-binding residues include Cys-4, Cys-7, Cys-20, and Cys-23. Positions 32-56 (KVILKENVAHENDKTIIADGETIEG) are flexible linker. The segment at 55 to 92 (EGRVAISLCPRCGSVRAILLNKKKRLYRCMTCNFVYNI) is ZR-C. Zn(2+)-binding residues include Cys-63 and Cys-66. Residues Lys-76, Lys-77, and Lys-78 contribute to the active site. The Zn(2+) site is built by Cys-83 and Cys-86.

It belongs to the archaeal RpoM/eukaryotic RPA12/RPB9/RPC11 RNA polymerase family. In terms of assembly, interacts with RNA polymerase. Zn(2+) is required as a cofactor.

Its function is as follows. A potent inhibitor of RNA polymerase (RNAP) probably involved in viral defense. Destabilizes the transcription pre-initiation complex of TBP, TFB, DNA and RNAP, inhibits abortive transcription initiation, productive initiation and transcription elongation. Increases the RNAP KM for NTPs about 50-fold. Overexpression of TFS1-tip4 (TFS1 with the active tip of this protein, phenocopies this protein) in S.acidocaldarius MW001 leads to severe growth inhibition. When bound to RNAP induces conformational changes that widen the DNA-binding channel, probably destabilizing the interaction of DNA with RNAP. The polypeptide is Transcription factor S4 (Saccharolobus solfataricus (strain ATCC 35092 / DSM 1617 / JCM 11322 / P2) (Sulfolobus solfataricus)).